A 160-amino-acid chain; its full sequence is MTKKKSHKPGSATIAMNKRARHEYFIEEEFETGLSLQGWEVKSLRAGKANISDSYILLRDGEAFLFGSTFQPLSVASSHIVCDPTRSRKLLLKKRELDTLIGKANRDGYTIVALSMYWKNAWAKLKIGLAKGKKEHDKRDDIKDREWKLDKARIMKHANR.

Belongs to the SmpB family.

It is found in the cytoplasm. In terms of biological role, required for rescue of stalled ribosomes mediated by trans-translation. Binds to transfer-messenger RNA (tmRNA), required for stable association of tmRNA with ribosomes. tmRNA and SmpB together mimic tRNA shape, replacing the anticodon stem-loop with SmpB. tmRNA is encoded by the ssrA gene; the 2 termini fold to resemble tRNA(Ala) and it encodes a 'tag peptide', a short internal open reading frame. During trans-translation Ala-aminoacylated tmRNA acts like a tRNA, entering the A-site of stalled ribosomes, displacing the stalled mRNA. The ribosome then switches to translate the ORF on the tmRNA; the nascent peptide is terminated with the 'tag peptide' encoded by the tmRNA and targeted for degradation. The ribosome is freed to recommence translation, which seems to be the essential function of trans-translation. The polypeptide is SsrA-binding protein (Erwinia tasmaniensis (strain DSM 17950 / CFBP 7177 / CIP 109463 / NCPPB 4357 / Et1/99)).